The following is a 260-amino-acid chain: HTH-type transcriptional repressor NanR (260 aa).

The segment at 1-20 (MNPFDSQSEDASDAIGRSLG) is disordered. In terms of domain architecture, HTH gntR-type spans 27–95 (KKLSEMVEEE…NGERARVSRP (69 aa)). Residues 55–74 (ERELMAFFNVGRPSVREALA) constitute a DNA-binding region (H-T-H motif).

It belongs to the NanR family.

In terms of biological role, transcriptional repressor that controls expression of the genes required for the catabolism of sialic acids. In Cronobacter sakazakii (strain ATCC BAA-894) (Enterobacter sakazakii), this protein is HTH-type transcriptional repressor NanR.